The chain runs to 411 residues: Secretion apparatus protein BsaZ (411 aa).

The next 4 helical transmembrane spans lie at 28–48, 80–100, 137–157, and 175–195; these read IVAL…VDLT, IAAP…LVQS, ALLY…LYHA, and IVLT…VLIL. Residues 341–411 form a disordered region; that stretch reads AANRGGPPPE…APARTGDQNA (71 aa). Positions 370–404 are enriched in low complexity; the sequence is DACADNAFPDDAPPGAAAPNAGSPDSPAPDGGAPA.

Belongs to the type III secretion exporter family.

The protein resides in the cell membrane. In terms of biological role, part of the bsa type III secretion system, is involved in the intracellular replication of invading bacteria inside the host cell. Probably necessary for the lysis of the vacuole membrane and escape into the host cell cytoplasm. The sequence is that of Secretion apparatus protein BsaZ (bsaZ) from Burkholderia mallei (strain NCTC 10247).